A 304-amino-acid polypeptide reads, in one-letter code: Beta-lactamase AER-1 (304 aa).

Positions 1 to 37 (MYVLSVEKPTLRNKFAAGIGVVLVCVVASFIPTPVFA) are cleaved as a signal peptide. The Acyl-ester intermediate role is filled by serine 83. A disulfide bridge connects residues cysteine 90 and cysteine 137. The interval 173-195 (ETQLDRKEPELNEGTPGDVRDTT) is disordered. A substrate-binding site is contributed by 248 to 250 (KTG).

This sequence belongs to the class-A beta-lactamase family.

It carries out the reaction a beta-lactam + H2O = a substituted beta-amino acid. Functionally, hydrolyzes carbenicillin. Methicillin and oxacillin are weakly hydrolyzed. The chain is Beta-lactamase AER-1 (aer1) from Aeromonas hydrophila.